The sequence spans 996 residues: Alanine--tRNA ligase, chloroplastic/mitochondrial (996 aa).

Residues H677, H681, C779, and H783 each contribute to the Zn(2+) site.

It belongs to the class-II aminoacyl-tRNA synthetase family. In terms of assembly, monomer. It depends on Zn(2+) as a cofactor.

Its subcellular location is the plastid. The protein resides in the chloroplast. The protein localises to the mitochondrion. The enzyme catalyses tRNA(Ala) + L-alanine + ATP = L-alanyl-tRNA(Ala) + AMP + diphosphate. Functionally, catalyzes the attachment of alanine to tRNA(Ala) in a two-step reaction: alanine is first activated by ATP to form Ala-AMP and then transferred to the acceptor end of tRNA(Ala). Also edits incorrectly charged tRNA(Ala) via its editing domain. In Oryza sativa subsp. japonica (Rice), this protein is Alanine--tRNA ligase, chloroplastic/mitochondrial.